The sequence spans 492 residues: UDP-N-acetylmuramate--L-alanine ligase (492 aa).

126-132 (GTHGKTT) contacts ATP.

The protein belongs to the MurCDEF family.

The protein localises to the cytoplasm. The enzyme catalyses UDP-N-acetyl-alpha-D-muramate + L-alanine + ATP = UDP-N-acetyl-alpha-D-muramoyl-L-alanine + ADP + phosphate + H(+). The protein operates within cell wall biogenesis; peptidoglycan biosynthesis. Functionally, cell wall formation. This chain is UDP-N-acetylmuramate--L-alanine ligase, found in Serratia proteamaculans (strain 568).